A 258-amino-acid chain; its full sequence is Ditrans,polycis-undecaprenyl-diphosphate synthase ((2E,6E)-farnesyl-diphosphate specific) (258 aa).

Aspartate 24 is a catalytic residue. Aspartate 24 is a Mg(2+) binding site. Residues 25–28 (GNGR), tryptophan 29, arginine 37, histidine 41, and 69–71 (SSE) contribute to the substrate site. Asparagine 72 functions as the Proton acceptor in the catalytic mechanism. Residues tryptophan 73, arginine 75, arginine 192, and 198-200 (RIS) contribute to the substrate site. Glutamate 211 serves as a coordination point for Mg(2+).

This sequence belongs to the UPP synthase family. Homodimer. Requires Mg(2+) as cofactor.

The enzyme catalyses 8 isopentenyl diphosphate + (2E,6E)-farnesyl diphosphate = di-trans,octa-cis-undecaprenyl diphosphate + 8 diphosphate. In terms of biological role, catalyzes the sequential condensation of isopentenyl diphosphate (IPP) with (2E,6E)-farnesyl diphosphate (E,E-FPP) to yield (2Z,6Z,10Z,14Z,18Z,22Z,26Z,30Z,34E,38E)-undecaprenyl diphosphate (di-trans,octa-cis-UPP). UPP is the precursor of glycosyl carrier lipid in the biosynthesis of bacterial cell wall polysaccharide components such as peptidoglycan and lipopolysaccharide. The protein is Ditrans,polycis-undecaprenyl-diphosphate synthase ((2E,6E)-farnesyl-diphosphate specific) of Xanthomonas campestris pv. campestris (strain ATCC 33913 / DSM 3586 / NCPPB 528 / LMG 568 / P 25).